A 641-amino-acid chain; its full sequence is MGPPLKLFKNQKYQELKQECMKDGRLFCDPTFLPENDSLFFNRLLPGKVVWKRPQDISDDPHLIVGNISNHQLIQGRLGNKAMISAFSCLAVQESHWTKAIPNHKDQEWDPRKPEKYAGIFHFRFWHFGEWTEVVIDDLLPTINGDLVFSFSTSMNEFWNALLEKAYAKLLGCYEALDGLTITDIIMDFTGTLAEIIDMQKGRYTDLVEEKYKLFGELYKTFTKGGLICCSIESPSQEEQEVETDWGLLKGYTYTMTDIRKLRLGERLVEVFSTEKLYMVRLRNPLGRQEWSGPWSEISEEWQQLTVTDRKNLGLVMSDDGEFWMSLEDFCHNFHKLNVCRNVNNPVFGRKELESVVGCWTVDDDPLMNRSGGCYNNRDTFLQNPQYIFTVPEDGHKVIMSLQQKDLRTYRRMGRPDNYIIGFELFKVEMNRRFRLHHLYIQERAGTSTYIDTRTVFLSKYLKKGSYVLVPTMFQHGRTSEFLLRIFSEVPVQLRELTLDMPKMSCWNLARGYPKVVTQITVHSAEGLEKKYANETVNPYLIIKCGKEEVRSPVQKNTVHAIFDTQAIFYRRTTDIPIIIQVWNSRKFCDQFLGQVTLDADPSDCRDLKSLYLRKKGGPTAKVKQGHISFKVISSDDLTEL.

The 318-residue stretch at leucine 26–valine 343 folds into the Calpain catalytic domain. The segment at asparagine 344–arginine 495 is domain III. Residues threonine 498–alanine 621 form the C2 domain.

The protein belongs to the peptidase C2 family. As to quaternary structure, interacts (via domain III) with microtubules. Interacts (via domain II) with ARHGEF2 (via the N-terminal zinc finger).

It localises to the cytoplasm. The protein resides in the perinuclear region. Its subcellular location is the cytoskeleton. It is found in the spindle. Functionally, microtubule-stabilizing protein that may be involved in the regulation of microtubule dynamics and cytoskeletal organization. May act as a regulator of RAC1 activity through interaction with ARHGEF2 to control lamellipodial formation and cell mobility. Does not seem to have protease activity as it has lost the active site residues. The protein is Calpain-6 (Capn6) of Mus musculus (Mouse).